The chain runs to 188 residues: F7-2 fimbrial protein (188 aa).

Residues 1–21 form the signal peptide; sequence MIKSVIAGAVAMAVVSFGAYA. A disulfide bond links Cys-43 and Cys-82.

The protein belongs to the fimbrial protein family.

Its subcellular location is the fimbrium. Its function is as follows. Fimbriae (also called pili), polar filaments radiating from the surface of the bacterium to a length of 0.5-1.5 micrometers and numbering 100-300 per cell, enable bacteria to colonize the epithelium of specific host organs. In Escherichia coli O6:H1 (strain CFT073 / ATCC 700928 / UPEC), this protein is F7-2 fimbrial protein (F7-2).